The following is a 243-amino-acid chain: Triosephosphate isomerase (243 aa).

Residue 9–11 (NWK) participates in substrate binding. His96 serves as the catalytic Electrophile. The active-site Proton acceptor is the Glu165. Substrate-binding positions include Gly171, Ser204, and 225 to 226 (GG).

The protein belongs to the triosephosphate isomerase family. Homodimer.

Its subcellular location is the cytoplasm. The enzyme catalyses D-glyceraldehyde 3-phosphate = dihydroxyacetone phosphate. Its pathway is carbohydrate biosynthesis; gluconeogenesis. It functions in the pathway carbohydrate degradation; glycolysis; D-glyceraldehyde 3-phosphate from glycerone phosphate: step 1/1. Functionally, involved in the gluconeogenesis. Catalyzes stereospecifically the conversion of dihydroxyacetone phosphate (DHAP) to D-glyceraldehyde-3-phosphate (G3P). This is Triosephosphate isomerase from Prochlorococcus marinus (strain MIT 9313).